The sequence spans 872 residues: Alanine--tRNA ligase (872 aa).

Positions 567, 571, 669, and 673 each coordinate Zn(2+).

This sequence belongs to the class-II aminoacyl-tRNA synthetase family. Zn(2+) serves as cofactor.

It is found in the cytoplasm. The catalysed reaction is tRNA(Ala) + L-alanine + ATP = L-alanyl-tRNA(Ala) + AMP + diphosphate. Its function is as follows. Catalyzes the attachment of alanine to tRNA(Ala) in a two-step reaction: alanine is first activated by ATP to form Ala-AMP and then transferred to the acceptor end of tRNA(Ala). Also edits incorrectly charged Ser-tRNA(Ala) and Gly-tRNA(Ala) via its editing domain. This chain is Alanine--tRNA ligase, found in Streptococcus pyogenes serotype M5 (strain Manfredo).